The primary structure comprises 240 residues: Transmembrane protein 65 (240 aa).

A mitochondrion-targeting transit peptide spans 1–61 (MSRLLPLLRS…RRLGTHPKKE (61 aa)). At 62–110 (PMEALNTAQGARDFIYSLHSTERSCLLKELHRFESIAIAQEKLEAPPPT) the chain is on the cytoplasmic side. The chain crosses the membrane as a helical span at residues 111 to 131 (PGQLRYVFIHNAIPFIGFGFL). At 132 to 142 (DNAIMIVAGTH) the chain is on the extracellular side. A helical membrane pass occupies residues 143–165 (IEMSIGIILGISTMAAAALGNLV). Over 166 to 209 (SDLAGLGLAGYVEALASRLGLSIPDLTPKQVDMWQTRLSTHLGK) the chain is Cytoplasmic. A helical transmembrane segment spans residues 210–230 (AVGVTIGCILGMFPLIFFGGG). Residues 231-240 (EEDEKLETKS) lie on the Extracellular side of the membrane.

In terms of assembly, monomer. Homodimer. Interacts with GJA1. Interacts weakly with DSP. Interacts with SCN1B. Predominantly expressed the ventricular tissue (at protein level).

It is found in the cell membrane. Its subcellular location is the mitochondrion inner membrane. In terms of biological role, essential for maintaining proper cardiac intercalated disk (ICD) structure and function as well as cardiac conduction velocity in the heart. Its association with SCN1B is required for stabilizing the perinexus in the ICD and for localization of GJA1 and SCN5A to the ICD. May regulate the function of the gap junction protein GJA1 and may contribute to the stability and proper localization of GJA1 to cardiac intercalated disk thereby regulating gap junction communication. May also play a role in the regulation of mitochondrial respiration and mitochondrial DNA copy number maintenance. The chain is Transmembrane protein 65 (TMEM65) from Homo sapiens (Human).